The chain runs to 227 residues: MEEALKTSHRAIRSFVLRQGRITAAQTRAVAEYLPARQIDAHAEWRDPWNNQRPLMLEIGFGNGEHLAAIAAQRPTWGCIGIEVHTPGVGSLLLQLVEAGTDNVRIVHDDAVTWLKTLPDAILRCIIIQFPDPWPKKRQQKRRLIQPDFAAVLCRLLQPGGELQLATDWADYAGQMLTVLNATPGLQNADADNGYVFRPDNRILTRFERRGQRLGHAVYDLCYRRIP.

E58, E83, D110, and D132 together coordinate S-adenosyl-L-methionine. D132 is a catalytic residue. Residues K136, D168, and 205–208 (TRFE) contribute to the substrate site.

It belongs to the class I-like SAM-binding methyltransferase superfamily. TrmB family.

The catalysed reaction is guanosine(46) in tRNA + S-adenosyl-L-methionine = N(7)-methylguanosine(46) in tRNA + S-adenosyl-L-homocysteine. It functions in the pathway tRNA modification; N(7)-methylguanine-tRNA biosynthesis. Catalyzes the formation of N(7)-methylguanine at position 46 (m7G46) in tRNA. This chain is tRNA (guanine-N(7)-)-methyltransferase, found in Acidithiobacillus ferrooxidans (strain ATCC 23270 / DSM 14882 / CIP 104768 / NCIMB 8455) (Ferrobacillus ferrooxidans (strain ATCC 23270)).